The following is a 112-amino-acid chain: Protein Churchill (112 aa).

Zn(2+)-binding residues include cysteine 2, cysteine 5, cysteine 30, cysteine 33, histidine 59, cysteine 61, cysteine 64, histidine 66, histidine 71, cysteine 88, and cysteine 91.

Belongs to the Churchill family.

Transcriptional activator that mediates FGF signaling during neural development. Plays a role in the regulation of cell movement. Does not bind DNA by itself. This Mus musculus (Mouse) protein is Protein Churchill (Churc1).